Consider the following 153-residue polypeptide: Probable ubiquitin-conjugating enzyme E2 C (153 aa).

The UBC core domain maps to 6–153 (SVSKRLQSEL…KRYQEATSRP (148 aa)). Cys90 acts as the Glycyl thioester intermediate in catalysis.

This sequence belongs to the ubiquitin-conjugating enzyme family. As to quaternary structure, component of the APC/C complex. Post-translationally, autoubiquitinated by the APC/C complex, leading to its degradation by the proteasome.

The enzyme catalyses S-ubiquitinyl-[E1 ubiquitin-activating enzyme]-L-cysteine + [E2 ubiquitin-conjugating enzyme]-L-cysteine = [E1 ubiquitin-activating enzyme]-L-cysteine + S-ubiquitinyl-[E2 ubiquitin-conjugating enzyme]-L-cysteine.. The protein operates within protein modification; protein ubiquitination. Catalyzes the covalent attachment of ubiquitin to other proteins. Acts as an essential factor of the anaphase promoting complex/cyclosome (APC/C), a cell cycle-regulated ubiquitin ligase that controls progression through mitosis. Acts by initiating polyubiquitin chains on APC/C substrates, leading to the degradation of APC/C substrates by the proteasome and promoting mitotic exit. This is Probable ubiquitin-conjugating enzyme E2 C (ube2c) from Dictyostelium discoideum (Social amoeba).